A 432-amino-acid chain; its full sequence is D-amino acid dehydrogenase (432 aa).

Residue 3-17 (VVILGSGVVGVTSAW) participates in FAD binding.

The protein belongs to the DadA oxidoreductase family. FAD is required as a cofactor.

The catalysed reaction is a D-alpha-amino acid + A + H2O = a 2-oxocarboxylate + AH2 + NH4(+). It functions in the pathway amino-acid degradation; D-alanine degradation; NH(3) and pyruvate from D-alanine: step 1/1. In terms of biological role, oxidative deamination of D-amino acids. This chain is D-amino acid dehydrogenase, found in Salmonella agona (strain SL483).